An 843-amino-acid chain; its full sequence is Protein P (843 aa).

The terminal protein domain (TP) stretch occupies residues 1 to 177 (MPLSYPHFRK…FCGSPYSWEQ (177 aa)). The interval 178–346 (ELQHGSTSLN…YCLSHIINLL (169 aa)) is spacer. 2 disordered regions span residues 228-259 (KQGQLANGKQGRSGRLRSRVHTPTRWPAGVEP) and 283-314 (EKANPSLSTSKRHTSTGNAVELNPVPPSSVGS). Over residues 239–249 (RSGRLRSRVHT) the composition is skewed to basic residues. The tract at residues 347–690 (EDWGPCYEHG…YMNLYPVARQ (344 aa)) is polymerase/reverse transcriptase domain (RT). The region spanning 357–600 (QHYIRTPRTP…YSLHFMGYVI (244 aa)) is the Reverse transcriptase domain. 3 residues coordinate Mg(2+): aspartate 429, aspartate 551, and aspartate 552.

It belongs to the hepadnaviridae P protein family.

The catalysed reaction is DNA(n) + a 2'-deoxyribonucleoside 5'-triphosphate = DNA(n+1) + diphosphate. It carries out the reaction Endonucleolytic cleavage to 5'-phosphomonoester.. With respect to regulation, activated by host HSP70 and HSP40 in vitro to be able to bind the epsilon loop of the pgRNA. Because deletion of the RNase H region renders the protein partly chaperone-independent, the chaperones may be needed indirectly to relieve occlusion of the RNA-binding site by this domain. Inhibited by several reverse-transcriptase inhibitors: Lamivudine, Adefovir and Entecavir. Functionally, multifunctional enzyme that converts the viral RNA genome into dsDNA in viral cytoplasmic capsids. This enzyme displays a DNA polymerase activity that can copy either DNA or RNA templates, and a ribonuclease H (RNase H) activity that cleaves the RNA strand of RNA-DNA heteroduplexes in a partially processive 3'- to 5'-endonucleasic mode. Neo-synthesized pregenomic RNA (pgRNA) are encapsidated together with the P protein, and reverse-transcribed inside the nucleocapsid. Initiation of reverse-transcription occurs first by binding the epsilon loop on the pgRNA genome, and is initiated by protein priming, thereby the 5'-end of (-)DNA is covalently linked to P protein. Partial (+)DNA is synthesized from the (-)DNA template and generates the relaxed circular DNA (RC-DNA) genome. After budding and infection, the RC-DNA migrates in the nucleus, and is converted into a plasmid-like covalently closed circular DNA (cccDNA). The activity of P protein does not seem to be necessary for cccDNA generation, and is presumably released from (+)DNA by host nuclear DNA repair machinery. The chain is Protein P from Homo sapiens (Human).